A 468-amino-acid polypeptide reads, in one-letter code: Putative magnesium transporter MRS2-G (468 aa).

Disordered regions lie at residues 1-76 (MGRR…AGKV) and 182-205 (NGQP…VPRL). Composition is skewed to low complexity over residues 14–23 (ASNASTSSST) and 31–45 (RLPS…SSPS). Residues 46–67 (PASPSPPPPSASHPAPPSPPLA) are compositionally biased toward pro residues. Basic and acidic residues predominate over residues 187–197 (GDDHGEKHDDS). The next 2 membrane-spanning stretches (helical) occupy residues 402–422 (LTLT…GAFA) and 437–457 (FFWP…IVLL).

This sequence belongs to the CorA metal ion transporter (MIT) (TC 1.A.35.5) family.

Its subcellular location is the membrane. Its function is as follows. Putative magnesium transporter. This chain is Putative magnesium transporter MRS2-G (MRS2-G), found in Oryza sativa subsp. indica (Rice).